Here is an 84-residue protein sequence, read N- to C-terminus: Small ribosomal subunit protein bS20 (84 aa).

Belongs to the bacterial ribosomal protein bS20 family.

In terms of biological role, binds directly to 16S ribosomal RNA. This Limosilactobacillus fermentum (strain NBRC 3956 / LMG 18251) (Lactobacillus fermentum) protein is Small ribosomal subunit protein bS20.